The following is a 473-amino-acid chain: Fumarate hydratase class II (473 aa).

Residues 104 to 106 (SGT), 128 to 131 (HPND), 138 to 140 (SSN), and T186 contribute to the substrate site. The active-site Proton donor/acceptor is H187. The active site involves S318. Substrate is bound by residues S319 and 324–326 (KVN).

This sequence belongs to the class-II fumarase/aspartase family. Fumarase subfamily. As to quaternary structure, homotetramer.

It localises to the cytoplasm. The enzyme catalyses (S)-malate = fumarate + H2O. The protein operates within carbohydrate metabolism; tricarboxylic acid cycle; (S)-malate from fumarate: step 1/1. Its function is as follows. Involved in the TCA cycle. Catalyzes the stereospecific interconversion of fumarate to L-malate. The sequence is that of Fumarate hydratase class II from Corynebacterium glutamicum (strain ATCC 13032 / DSM 20300 / JCM 1318 / BCRC 11384 / CCUG 27702 / LMG 3730 / NBRC 12168 / NCIMB 10025 / NRRL B-2784 / 534).